The primary structure comprises 434 residues: D-amino acid dehydrogenase (434 aa).

3-17 (VVILGSGVVGVTSAW) is a binding site for FAD.

Belongs to the DadA oxidoreductase family. The cofactor is FAD.

The enzyme catalyses a D-alpha-amino acid + A + H2O = a 2-oxocarboxylate + AH2 + NH4(+). It functions in the pathway amino-acid degradation; D-alanine degradation; NH(3) and pyruvate from D-alanine: step 1/1. Oxidative deamination of D-amino acids. The polypeptide is D-amino acid dehydrogenase (Yersinia pseudotuberculosis serotype O:1b (strain IP 31758)).